Reading from the N-terminus, the 423-residue chain is Putative competence-damage inducible protein (423 aa).

Belongs to the CinA family.

The protein is Putative competence-damage inducible protein of Streptococcus pyogenes serotype M49 (strain NZ131).